The primary structure comprises 72 residues: Small ribosomal subunit protein bS20 (72 aa).

It belongs to the bacterial ribosomal protein bS20 family.

In terms of biological role, binds directly to 16S ribosomal RNA. The chain is Small ribosomal subunit protein bS20 (rpsT) from Proteus mirabilis.